The sequence spans 336 residues: Heat-inducible transcription repressor HrcA (336 aa).

This sequence belongs to the HrcA family.

In terms of biological role, negative regulator of class I heat shock genes (grpE-dnaK-dnaJ and groELS operons). Prevents heat-shock induction of these operons. The sequence is that of Heat-inducible transcription repressor HrcA from Variovorax paradoxus (strain S110).